Reading from the N-terminus, the 756-residue chain is Catalase-peroxidase (756 aa).

Positions 91–244 (WHSAGTYRTG…LAAVQMGLIY (154 aa)) form a cross-link, tryptophyl-tyrosyl-methioninium (Trp-Tyr) (with M-270). Catalysis depends on H92, which acts as the Proton acceptor. The segment at 198-230 (AQKKMQQPGDGTLVAEPENHANEESRTASGERN) is disordered. Residues 214–223 (PENHANEESR) show a composition bias toward basic and acidic residues. The segment at residues 244-270 (YVNPEGPEGVPDPVASARDIRETFGRM) is a cross-link (tryptophyl-tyrosyl-methioninium (Tyr-Met) (with W-91)). Residue H285 coordinates heme b. The segment at 371-390 (KNGAGAGKIPDAHDPSKRHA) is disordered.

It belongs to the peroxidase family. Peroxidase/catalase subfamily. As to quaternary structure, homodimer or homotetramer. Heme b serves as cofactor. Post-translationally, formation of the three residue Trp-Tyr-Met cross-link is important for the catalase, but not the peroxidase activity of the enzyme.

The enzyme catalyses H2O2 + AH2 = A + 2 H2O. It catalyses the reaction 2 H2O2 = O2 + 2 H2O. Its function is as follows. Bifunctional enzyme with both catalase and broad-spectrum peroxidase activity. The sequence is that of Catalase-peroxidase from Pseudomonas syringae pv. tomato (strain ATCC BAA-871 / DC3000).